We begin with the raw amino-acid sequence, 187 residues long: Probable chemoreceptor glutamine deamidase CheD 1 (187 aa).

This sequence belongs to the CheD family.

The catalysed reaction is L-glutaminyl-[protein] + H2O = L-glutamyl-[protein] + NH4(+). Its function is as follows. Probably deamidates glutamine residues to glutamate on methyl-accepting chemotaxis receptors (MCPs), playing an important role in chemotaxis. This Ruegeria sp. (strain TM1040) (Silicibacter sp.) protein is Probable chemoreceptor glutamine deamidase CheD 1.